The sequence spans 81 residues: NADH-ubiquinone oxidoreductase chain 6 (81 aa).

A run of 3 helical transmembrane segments spans residues 1–21, 27–47, and 48–68; these read MTYF…GVAS, YGVV…LSLG, and VSFV…VVFV.

The protein belongs to the complex I subunit 6 family.

The protein localises to the mitochondrion membrane. The enzyme catalyses a ubiquinone + NADH + 5 H(+)(in) = a ubiquinol + NAD(+) + 4 H(+)(out). Its function is as follows. Core subunit of the mitochondrial membrane respiratory chain NADH dehydrogenase (Complex I) that is believed to belong to the minimal assembly required for catalysis. Complex I functions in the transfer of electrons from NADH to the respiratory chain. The immediate electron acceptor for the enzyme is believed to be ubiquinone. In Anas platyrhynchos (Mallard), this protein is NADH-ubiquinone oxidoreductase chain 6 (MT-ND6).